Reading from the N-terminus, the 901-residue chain is MLIPSKLSRPVRLDHTVVRERLLAKLSGANNFRLALITSPAGYGKTTLVSQWAAGKSELGWFSLDEGDNQQERFASYLIAAIQQATNGHCTASEVMAQKRQYASLSSLFAQLFIELAEWHQPLYLVIDDYHLITNPVIHESMRFFLRHQPENLTLVVMSRNLPQLGIANLRVRDQLLEIGSQQLAFNHQEAKQFFDRRLTSPIEAAESSRMCDDVSGWATALQLIALSARQNSHSAHQSARRLSGINASHLSDYLVDEVLNNVDLATRHFLLKSAILRSMNDALITRVTGEENGQMRLEEIERQGLFLQRMDDSGEWFSYHPLFGNFLRQRCQWELAAELPEIHLAAAESWMAQGFPSEAIHHALAAGDASMLRDILLNHAWGLFNHSELALLEESLKALPWESLLENPRLVLLQAWLMQSQHRYSEVNTLLARAEQEIKGEMTGTLHAEFNALRAQVAINAGNPEEAERLARLALDELPIAWFYSRIVATSVHGEVLHCKGDLSRSLALMQQTEQMARHHDVWHYALWSLIQQSEIYFAQGFLQAAWETQDKAFQLIKEQHLEQLPMHEFLVRIRAQLLWAWSRLDEAEASARSGIEVLSSFQPQQQLQCLALLVQCSLARGDLDNARTLLNRLENLLGNGQYHSDWISNADKVRVIYWQMTGDKKAAANWLSQTPKPEFANNHFLQGQWRNIARAQILLGEFEPAEIVLEELNENARQLRLMSDLNRNLLLLNQLYWQAGRKNDAQRVLMEALQLANRTGFISHFVIEGEAMAQQLRQLIQLNTLPELEQHRAQRILREINQHHRHKFAHFDENFVERLLNHPEVPELIRTSPLTQREWQVLGLIYSGYSNEQIAGELEVAATTIKTHIRNLYQKLGVAHRQDAVQHAQQLLKMMGYGV.

39–46 contributes to the ATP binding site; it reads SPAGYGKT. The HTH luxR-type domain maps to 829–894; it reads ELIRTSPLTQ…DAVQHAQQLL (66 aa). Residues 853–872 constitute a DNA-binding region (H-T-H motif); the sequence is NEQIAGELEVAATTIKTHIR.

This sequence belongs to the MalT family. Monomer in solution. Oligomerizes to an active state in the presence of the positive effectors ATP and maltotriose.

Activated by ATP and maltotriose, which are both required for DNA binding. Its function is as follows. Positively regulates the transcription of the maltose regulon whose gene products are responsible for uptake and catabolism of malto-oligosaccharides. Specifically binds to the promoter region of its target genes, recognizing a short DNA motif called the MalT box. The protein is HTH-type transcriptional regulator MalT of Escherichia fergusonii (strain ATCC 35469 / DSM 13698 / CCUG 18766 / IAM 14443 / JCM 21226 / LMG 7866 / NBRC 102419 / NCTC 12128 / CDC 0568-73).